The chain runs to 184 residues: Protein GrpE (184 aa).

The disordered stretch occupies residues 1 to 24; the sequence is MADEQLDEKNLNSEEAGAVNGDAR.

It belongs to the GrpE family. As to quaternary structure, homodimer.

The protein localises to the cytoplasm. Its function is as follows. Participates actively in the response to hyperosmotic and heat shock by preventing the aggregation of stress-denatured proteins, in association with DnaK and GrpE. It is the nucleotide exchange factor for DnaK and may function as a thermosensor. Unfolded proteins bind initially to DnaJ; upon interaction with the DnaJ-bound protein, DnaK hydrolyzes its bound ATP, resulting in the formation of a stable complex. GrpE releases ADP from DnaK; ATP binding to DnaK triggers the release of the substrate protein, thus completing the reaction cycle. Several rounds of ATP-dependent interactions between DnaJ, DnaK and GrpE are required for fully efficient folding. In Pseudomonas entomophila (strain L48), this protein is Protein GrpE.